The chain runs to 483 residues: Aspartyl/glutamyl-tRNA(Asn/Gln) amidotransferase subunit B (483 aa).

This sequence belongs to the GatB/GatE family. GatB subfamily. Heterotrimer of A, B and C subunits.

It carries out the reaction L-glutamyl-tRNA(Gln) + L-glutamine + ATP + H2O = L-glutaminyl-tRNA(Gln) + L-glutamate + ADP + phosphate + H(+). The catalysed reaction is L-aspartyl-tRNA(Asn) + L-glutamine + ATP + H2O = L-asparaginyl-tRNA(Asn) + L-glutamate + ADP + phosphate + 2 H(+). Its function is as follows. Allows the formation of correctly charged Asn-tRNA(Asn) or Gln-tRNA(Gln) through the transamidation of misacylated Asp-tRNA(Asn) or Glu-tRNA(Gln) in organisms which lack either or both of asparaginyl-tRNA or glutaminyl-tRNA synthetases. The reaction takes place in the presence of glutamine and ATP through an activated phospho-Asp-tRNA(Asn) or phospho-Glu-tRNA(Gln). This is Aspartyl/glutamyl-tRNA(Asn/Gln) amidotransferase subunit B from Herpetosiphon aurantiacus (strain ATCC 23779 / DSM 785 / 114-95).